Consider the following 295-residue polypeptide: uncharacterized protein (295 aa).

Disordered stretches follow at residues 33-52 (VDAP…DSHS) and 180-295 (LSKA…AELK). The residue at position 50 (S50) is a Phosphoserine. Polar residues-rich tracts occupy residues 205 to 217 (QKNS…SKLI) and 241 to 251 (TSRASVLSQSP). The segment covering 267–276 (EASEGPEDTP) has biased composition (acidic residues). Positions 277–289 (ESSQSPEESVSAS) are enriched in low complexity.

This is an uncharacterized protein from Homo sapiens (Human).